Here is a 305-residue protein sequence, read N- to C-terminus: Sulfate adenylyltransferase subunit 2 (305 aa).

The protein belongs to the PAPS reductase family. CysD subfamily. In terms of assembly, heterodimer composed of CysD, the smaller subunit, and CysN.

It carries out the reaction sulfate + ATP + H(+) = adenosine 5'-phosphosulfate + diphosphate. The protein operates within sulfur metabolism; hydrogen sulfide biosynthesis; sulfite from sulfate: step 1/3. In terms of biological role, with CysN forms the ATP sulfurylase (ATPS) that catalyzes the adenylation of sulfate producing adenosine 5'-phosphosulfate (APS) and diphosphate, the first enzymatic step in sulfur assimilation pathway. APS synthesis involves the formation of a high-energy phosphoric-sulfuric acid anhydride bond driven by GTP hydrolysis by CysN coupled to ATP hydrolysis by CysD. In Stutzerimonas stutzeri (strain A1501) (Pseudomonas stutzeri), this protein is Sulfate adenylyltransferase subunit 2.